The primary structure comprises 804 residues: Angiotensin-converting enzyme 2 (804 aa).

The first 17 residues, 1–17 (MTGSFWLLLSLVAVTAA), serve as a signal peptide directing secretion. The Extracellular portion of the chain corresponds to 18–739 (QSTTEEQAKT…LGPPYEPPVT (722 aa)). The Peptidase M2 domain occupies 19–606 (STTEEQAKTF…QNRNSFVGWS (588 aa)). N-linked (GlcNAc...) asparagine glycosylation is found at Asn-53 and Asn-90. Position 168 (Arg-168) interacts with chloride. Arg-272 is a binding site for substrate. Asn-298 carries an N-linked (GlcNAc...) asparagine glycan. Residues Cys-343 and Cys-360 are joined by a disulfide bond. 344–345 (HP) provides a ligand contact to substrate. His-373 is a binding site for Zn(2+). Glu-374 serves as the catalytic Proton acceptor. Zn(2+) contacts are provided by His-377 and Glu-401. Asn-431 is a glycosylation site (N-linked (GlcNAc...) asparagine). The chloride site is built by Trp-476 and Lys-480. Residue His-504 is the Proton donor of the active site. Residue Tyr-514 coordinates substrate. Cys-529 and Cys-541 are oxidised to a cystine. N-linked (GlcNAc...) asparagine glycosylation is present at Asn-545. Residues 613–804 (SDQSIKVRIS…QNIDDVQTSL (192 aa)) form the Collectrin-like domain. The segment at 651–658 (RKYFSEAR) is essential for cleavage by ADAM17. N-linked (GlcNAc...) asparagine glycosylation is found at Asn-659 and Asn-689. Residues 696-715 (RTEVENAIRLSRDRINDVFQ) form an essential for cleavage by TMPRSS11D and TMPRSS2 region. The chain crosses the membrane as a helical span at residues 740–760 (IWLIIFGVVMGVVVIGIVVLI). At 761–804 (FTGIRNRRKKNQASSEENPYGSVDLNKGENNSGFQNIDDVQTSL) the chain is on the cytoplasmic side. The segment at 771–804 (NQASSEENPYGSVDLNKGENNSGFQNIDDVQTSL) is disordered. The short motif at 777-785 (ENPYGSVDL) is the LIR element. At Tyr-780 the chain carries Phosphotyrosine. An Endocytic sorting signal motif is present at residues 780 to 783 (YGSV). The SH2-binding motif lies at 780–784 (YGSVD). The residue at position 782 (Ser-782) is a Phosphoserine. A Glycyl lysine isopeptide (Lys-Gly) (interchain with G-Cter in ubiquitin) cross-link involves residue Lys-787. Polar residues predominate over residues 788–804 (GENNSGFQNIDDVQTSL). Residues 791–794 (NSGF) carry the PTB motif. The PDZ-binding signature appears at 802–804 (TSL).

It belongs to the peptidase M2 family. As to quaternary structure, homodimer. Interacts with the catalytically active form of TMPRSS2. Interacts with SLC6A19; this interaction is essential for expression and function of SLC6A19 in intestine. Interacts with ITGA5:ITGB1. Probably interacts (via endocytic sorting signal motif) with AP2M1; the interaction is inhibited by phosphorylation of Tyr-780. Interacts (via PDZ-binding motif) with NHERF1 (via PDZ domains); the interaction may enhance ACE2 membrane residence. Zn(2+) serves as cofactor. Chloride is required as a cofactor. In terms of processing, proteolytic cleavage by ADAM17 generates a secreted form. Also cleaved by serine proteases: TMPRSS2, TMPRSS11D and HPN/TMPRSS1. Phosphorylated. Phosphorylation at Tyr-780 probably inhibits interaction with AP2M1 and enables interactions with proteins containing SH2 domains. Post-translationally, ubiquitinated. Ubiquitinated on Lys-787 via 'Lys-48'-linked ubiquitin. 'Lys-48'-linked deubiquitinated by USP50 on the Lys-787; leading to its stabilization.

It is found in the secreted. The protein resides in the cell membrane. The protein localises to the cytoplasm. It localises to the cell projection. Its subcellular location is the cilium. It is found in the apical cell membrane. The catalysed reaction is angiotensin II + H2O = angiotensin-(1-7) + L-phenylalanine. It carries out the reaction angiotensin I + H2O = angiotensin-(1-9) + L-leucine. The enzyme catalyses bradykinin(1-8) + H2O = bradykinin(1-7) + L-phenylalanine. It catalyses the reaction neurotensin + H2O = neurotensin-(1-12) + L-leucine. The catalysed reaction is kinetensin + H2O = kinetensin-(1-8) + L-leucine. It carries out the reaction dynorphin A-(1-13) + H2O = dynorphin A-(1-12) + L-lysine. The enzyme catalyses apelin-13 + H2O = apelin-12 + L-phenylalanine. It catalyses the reaction [Pyr1]apelin-13 + H2O = [Pyr1]apelin-12 + L-phenylalanine. The catalysed reaction is apelin-17 + H2O = apelin-16 + L-phenylalanine. Functionally, essential counter-regulatory carboxypeptidase of the renin-angiotensin hormone system that is a critical regulator of blood volume, systemic vascular resistance, and thus cardiovascular homeostasis. Converts angiotensin I to angiotensin 1-9, a nine-amino acid peptide with anti-hypertrophic effects in cardiomyocytes, and angiotensin II to angiotensin 1-7, which then acts as a beneficial vasodilator and anti-proliferation agent, counterbalancing the actions of the vasoconstrictor angiotensin II. Also removes the C-terminal residue from three other vasoactive peptides, neurotensin, kinetensin, and des-Arg bradykinin, but is not active on bradykinin. Also cleaves other biological peptides, such as apelins, casomorphins and dynorphin A. Plays an important role in amino acid transport by acting as binding partner of amino acid transporter SLC6A19 in intestine, regulating trafficking, expression on the cell surface, and its catalytic activity. In Bos taurus (Bovine), this protein is Angiotensin-converting enzyme 2 (ACE2).